The primary structure comprises 711 residues: Ent-copalyl diphosphate synthase 1 (711 aa).

Residue Lys-145 participates in substrate binding. Mg(2+) contacts are provided by Asp-277 and Asp-279. The DXDD motif signature appears at 277–280 (DIDD). Lys-364 provides a ligand contact to substrate.

It belongs to the terpene synthase family. Tpsc subfamily. It depends on Mg(2+) as a cofactor.

The catalysed reaction is (2E,6E,10E)-geranylgeranyl diphosphate = ent-copalyl diphosphate. It participates in secondary metabolite biosynthesis; terpenoid biosynthesis. Functionally, involved in the biosynthesis of ent-kaurene diterpenoids natural products such as oridonin, miltiradiene, eriocalyxin B and nezukol, known to exhibit antitumor, anti-inflammatory and antibacterial activities. Catalyzes the conversion of (2E,6E,10E)-geranylgeranyl diphosphate (GGPP) to ent-copalyl diphosphate (ent-CPP). This chain is Ent-copalyl diphosphate synthase 1, found in Isodon japonicus (Scutellaria japonica).